The following is a 1235-amino-acid chain: Topoisomerase 1-associated factor 1 (1235 aa).

Disordered regions lie at residues 327 to 357 (RERK…GPPV), 584 to 610 (GEEA…HAER), 812 to 841 (EGAA…TEAR), and 897 to 1235 (EFSP…SDEE). Residues 585-603 (EEAEDVGVPEDNDADDSGD) are compositionally biased toward acidic residues. Positions 929-947 (DDDEEEIRGFLGDDDDEDF) are enriched in acidic residues. Residues 964–973 (QKKRQRKRRR) show a composition bias toward basic residues. Acidic residues predominate over residues 977–986 (SGDEEDEGVS). The segment covering 999-1044 (EKELEKIRKIKSEMYVHASDDETDDERDREFFERERKRQETKDSKF) has biased composition (basic and acidic residues). Composition is skewed to acidic residues over residues 1070–1081 (VLDDEPESDESE) and 1099–1118 (SEEE…SDEE). Residues 1124 to 1150 (AKSKTSKRKAAVPSKRPARRPGTAKKR) show a composition bias toward basic residues. Over residues 1156-1170 (SDNDEDEDEEEDAMD) the composition is skewed to acidic residues. Over residues 1193 to 1202 (LGRRIDKMAM) the composition is skewed to basic and acidic residues. Acidic residues predominate over residues 1203-1212 (DDGDEDEDDQ).

The protein belongs to the timeless family. In terms of assembly, component of the fork protection complex (FPC) consisting of tof-1 and csm-3.

The protein localises to the nucleus. Forms a fork protection complex (FPC) with csm-3 and which is required for chromosome segregation during meiosis and DNA damage repair. FPC coordinates leading and lagging strand synthesis and moves with the replication fork. FPC stabilizes replication forks in a configuration that is recognized by replication checkpoint sensors. The polypeptide is Topoisomerase 1-associated factor 1 (tof-1) (Neurospora crassa (strain ATCC 24698 / 74-OR23-1A / CBS 708.71 / DSM 1257 / FGSC 987)).